Here is a 538-residue protein sequence, read N- to C-terminus: Potassium channel subfamily K member 10 (538 aa).

The Cytoplasmic portion of the chain corresponds to 1–71 (MFFLYTDFFL…GLQTVMKWKT (71 aa)). Residues 72-92 (VVAIFVVVVVYLVTGGLVFRA) traverse the membrane as a helical segment. N-linked (GlcNAc...) asparagine glycosylation is found at Asn144, Asn147, and Asn148. Positions 154–180 (LGSAFFFAGTVITTIGYGNIAPSTEGG) form an intramembrane region, pore-forming. Thr167, Ile168, Gly169, and Tyr170 together coordinate K(+). Positions 167–172 (TIGYGN) are selectivity filter 1. The helical transmembrane segment at 182–202 (IFCILYAIFGIPLFGFLLAGI) threads the bilayer. The Cytoplasmic segment spans residues 203–233 (GDQLGTIFGKSIARVEKVFRKKQVSQTKIRV). Residues 234-254 (ISTILFILAGCIVFVTIPAVI) traverse the membrane as a helical segment. The segment at residues 263-294 (ALESIYFVVVTLTTVGFGDFVAGGNAGINYRE) is an intramembrane region (pore-forming). Residues Thr276, Val277, Gly278, and Phe279 each contribute to the K(+) site. The selectivity filter 2 stretch occupies residues 276–281 (TVGFGD). The chain crosses the membrane as a helical span at residues 299 to 319 (LVWFWILVGLAYFAAVLSMIG). The Cytoplasmic segment spans residues 320–538 (DWLRVLSKKT…ENNSLLEDRN (219 aa)). The span at 412–421 (SQESINNRPN) shows a compositional bias: polar residues. Disordered stretches follow at residues 412–443 (SQESINNRPNNLRLKGPEQLNKHGQGASEDNI) and 510–538 (QHAELENGMIPTDTKDREPENNSLLEDRN). The span at 522–538 (DTKDREPENNSLLEDRN) shows a compositional bias: basic and acidic residues.

This sequence belongs to the two pore domain potassium channel (TC 1.A.1.8) family. As to quaternary structure, homodimer; disulfide-linked. Forms heterodimers with other 2-pore domain K(+) channel subunits, such as KCNK2, KCNK4 and KCNK18. In terms of tissue distribution, abundantly expressed in pancreas and kidney and to a lower level in brain, testis, colon, and small intestine. In brain, mainly expressed in cerebellum, occipital lobe, putamen, and thalamus. No expression is detected in amygdala and spinal cord. As to expression, strongly expressed in kidney (primarily in the proximal tubule) and pancreas. Abundantly expressed in brain.

The protein resides in the cell membrane. It carries out the reaction K(+)(in) = K(+)(out). The enzyme catalyses Rb(+)(in) = Rb(+)(out). It catalyses the reaction Cs(+)(in) = Cs(+)(out). Activated by various stimuli including acidic pH, anesthetics chloroform, halothane and isoflurane, mechanical stretch, lipids such as arachidonic, docosahexaenoic and linoleic polyunsaturated fatty acids and lysophosphatidylcholine and lysophosphatidylinositol lysophospholipids. Inhibited by norfluoxetine, the active metabolite of antidepressant fluoxetine (Prozac). Its function is as follows. K(+) channel that conducts voltage-dependent outward rectifying currents upon membrane depolarization. Voltage sensing is coupled to K(+) electrochemical gradient in an 'ion flux gating' mode where outward but not inward ion flow opens the gate. Converts to voltage-independent 'leak' conductance mode upon stimulation by various stimuli including mechanical membrane stretch, acidic pH, heat and lipids. Homo- and heterodimerizes to form functional channels with distinct regulatory and gating properties. In trigeminal ganglia sensory neurons, the heterodimer of KCNK10/TREK-2 and KCNK18/TRESK inhibits neuronal firing and neurogenic inflammation by stabilizing the resting membrane potential at K(+) equilibrium potential as well as by regulating the threshold of action potentials and the spike frequency. Permeable to other monovalent ions such as Rb(+) and Cs(+). The sequence is that of Potassium channel subfamily K member 10 from Homo sapiens (Human).